The chain runs to 82 residues: Acyl carrier protein (82 aa).

In terms of domain architecture, Carrier spans 3–81; it reads SSEQEILAGL…DAVTYIAGAQ (79 aa). Ser41 carries the post-translational modification O-(pantetheine 4'-phosphoryl)serine.

This sequence belongs to the acyl carrier protein (ACP) family. 4'-phosphopantetheine is transferred from CoA to a specific serine of apo-ACP by AcpS. This modification is essential for activity because fatty acids are bound in thioester linkage to the sulfhydryl of the prosthetic group.

Its subcellular location is the cytoplasm. The protein operates within lipid metabolism; fatty acid biosynthesis. In terms of biological role, carrier of the growing fatty acid chain in fatty acid biosynthesis. The protein is Acyl carrier protein of Beutenbergia cavernae (strain ATCC BAA-8 / DSM 12333 / CCUG 43141 / JCM 11478 / NBRC 16432 / NCIMB 13614 / HKI 0122).